The following is a 408-amino-acid chain: Peptidase T (408 aa).

A Zn(2+)-binding site is contributed by His78. The active site involves Asp80. Asp140 is a Zn(2+) binding site. Glu173 acts as the Proton acceptor in catalysis. 3 residues coordinate Zn(2+): Glu174, Asp196, and His379.

This sequence belongs to the peptidase M20B family. It depends on Zn(2+) as a cofactor.

The protein localises to the cytoplasm. It catalyses the reaction Release of the N-terminal residue from a tripeptide.. In terms of biological role, cleaves the N-terminal amino acid of tripeptides. This Escherichia coli (strain K12 / MC4100 / BW2952) protein is Peptidase T.